The primary structure comprises 630 residues: Zinc finger protein 37 homolog (630 aa).

3 disordered regions span residues 1 to 45 (MSVS…SAAE), 77 to 172 (KPDM…PSKK), and 193 to 285 (HSRN…KHEK). Over residues 14–30 (ETVDRRRSAETTKEAGR) the composition is skewed to basic and acidic residues. The 72-residue stretch at 32–103 (LEMAVSEPEA…KGKRPSQGCP (72 aa)) folds into the KRAB domain. Ser42 bears the Phosphoserine mark. A compositionally biased stretch (basic and acidic residues) spans 110 to 122 (KQKETDGKVQKDD). The span at 161 to 172 (NNLHKKHVPSKK) shows a compositional bias: basic residues. Positions 193–206 (HSRNCVKRKSDAAK) are enriched in basic and acidic residues. Basic residues predominate over residues 221-231 (KGKKQTGKKHE). Composition is skewed to basic and acidic residues over residues 232-243 (KLSSHSSSDKCN) and 260-274 (IKQD…HEKS). 2 C2H2-type zinc fingers span residues 293 to 315 (YECN…QRVH) and 321 to 343 (YECN…QRTH). Residues 349–367 (YECIQCGKAHGHKHALTDH) form a C2H2-type 3; atypical zinc finger. 9 consecutive C2H2-type zinc fingers follow at residues 377-399 (YECA…VRSH), 405-427 (YECK…VRTH), 433-455 (YECN…MRIH), 461-483 (FECN…QRTH), 489-511 (YKCN…MRTH), 517-539 (FECN…QRVH), 545-567 (YECN…QRTH), 573-595 (YECN…QRSH), and 601-623 (YECN…VKTH).

The protein belongs to the krueppel C2H2-type zinc-finger protein family. In terms of tissue distribution, expressed at low level in several tissues including fetal cartilage.

The protein localises to the nucleus. May be involved in transcriptional regulation. The sequence is that of Zinc finger protein 37 homolog (ZFP37) from Homo sapiens (Human).